A 216-amino-acid polypeptide reads, in one-letter code: Octanoyltransferase (216 aa).

The region spanning 32–207 is the BPL/LPL catalytic domain; it reads ENSPDELWLV…TFSQLLGYEH (176 aa). Substrate contacts are provided by residues 71–78, 138–140, and 151–153; these read RGGQVTYH, SLG, and GLA. The active-site Acyl-thioester intermediate is Cys-169.

The protein belongs to the LipB family.

The protein resides in the cytoplasm. The catalysed reaction is octanoyl-[ACP] + L-lysyl-[protein] = N(6)-octanoyl-L-lysyl-[protein] + holo-[ACP] + H(+). It functions in the pathway protein modification; protein lipoylation via endogenous pathway; protein N(6)-(lipoyl)lysine from octanoyl-[acyl-carrier-protein]: step 1/2. Its function is as follows. Catalyzes the transfer of endogenously produced octanoic acid from octanoyl-acyl-carrier-protein onto the lipoyl domains of lipoate-dependent enzymes. Lipoyl-ACP can also act as a substrate although octanoyl-ACP is likely to be the physiological substrate. The polypeptide is Octanoyltransferase (Shewanella amazonensis (strain ATCC BAA-1098 / SB2B)).